The primary structure comprises 201 residues: Putative ankyrin repeat protein YahD (201 aa).

ANK repeat units lie at residues 5–34 (NLPA…DINT), 38–67 (QGKT…DINK), 71–100 (TCLN…DLNC), 104–134 (FGGV…NVNQ), 138–172 (VGWT…SPHL), and 176–201 (YGKT…AAGA).

The polypeptide is Putative ankyrin repeat protein YahD (yahD) (Escherichia coli (strain K12)).